The sequence spans 263 residues: Trans-aconitate 2-methyltransferase (263 aa).

This sequence belongs to the methyltransferase superfamily. Tam family.

The protein resides in the cytoplasm. It carries out the reaction trans-aconitate + S-adenosyl-L-methionine = (E)-3-(methoxycarbonyl)pent-2-enedioate + S-adenosyl-L-homocysteine. Its function is as follows. Catalyzes the S-adenosylmethionine monomethyl esterification of trans-aconitate. In Mycobacterium marinum (strain ATCC BAA-535 / M), this protein is Trans-aconitate 2-methyltransferase.